A 547-amino-acid chain; its full sequence is Chaperonin GroEL (547 aa).

ATP is bound by residues 29 to 32 (TLGP), 86 to 90 (DGTTT), Gly-413, 478 to 480 (DVL), and Asp-494.

The protein belongs to the chaperonin (HSP60) family. In terms of assembly, forms a cylinder of 14 subunits composed of two heptameric rings stacked back-to-back. Interacts with the co-chaperonin GroES.

It localises to the cytoplasm. It carries out the reaction ATP + H2O + a folded polypeptide = ADP + phosphate + an unfolded polypeptide.. Together with its co-chaperonin GroES, plays an essential role in assisting protein folding. The GroEL-GroES system forms a nano-cage that allows encapsulation of the non-native substrate proteins and provides a physical environment optimized to promote and accelerate protein folding. The polypeptide is Chaperonin GroEL (Alkaliphilus metalliredigens (strain QYMF)).